Reading from the N-terminus, the 143-residue chain is Large ribosomal subunit protein uL11 (143 aa).

The protein belongs to the universal ribosomal protein uL11 family. Part of the ribosomal stalk of the 50S ribosomal subunit. Interacts with L10 and the large rRNA to form the base of the stalk. L10 forms an elongated spine to which L12 dimers bind in a sequential fashion forming a multimeric L10(L12)X complex. In terms of processing, one or more lysine residues are methylated.

In terms of biological role, forms part of the ribosomal stalk which helps the ribosome interact with GTP-bound translation factors. In Methylococcus capsulatus (strain ATCC 33009 / NCIMB 11132 / Bath), this protein is Large ribosomal subunit protein uL11.